A 90-amino-acid polypeptide reads, in one-letter code: Bombyxin D-1 (90 aa).

Positions 1-18 (MKLLGFFLSWVSVCAIVS) are cleaved as a signal peptide. 3 cysteine pairs are disulfide-bonded: C27–C77, C39–C90, and C76–C81. A propeptide spans 48–68 (SVAHYAGYGWPLLPSLSEERG) (c peptide like).

Belongs to the insulin family. In terms of assembly, heterodimer of a B chain and an A chain linked by two disulfide bonds.

The protein localises to the secreted. In terms of biological role, brain peptide responsible for activation of prothoracic glands to produce ecdysone in insects. The sequence is that of Bombyxin D-1 (BBXD1) from Bombyx mori (Silk moth).